A 325-amino-acid polypeptide reads, in one-letter code: Leucine carboxyl methyltransferase 1 (325 aa).

S-adenosyl-L-methionine contacts are provided by residues Arg-79, Gly-104, Asp-127, 174–175 (DL), and Glu-200.

This sequence belongs to the methyltransferase superfamily. LCMT family.

It carries out the reaction [phosphatase 2A protein]-C-terminal L-leucine + S-adenosyl-L-methionine = [phosphatase 2A protein]-C-terminal L-leucine methyl ester + S-adenosyl-L-homocysteine. In terms of biological role, methylates the carboxyl group of the C-terminal leucine residue of protein phosphatase 2A catalytic subunits to form alpha-leucine ester residues. This is Leucine carboxyl methyltransferase 1 (PPM1) from Eremothecium gossypii (strain ATCC 10895 / CBS 109.51 / FGSC 9923 / NRRL Y-1056) (Yeast).